The chain runs to 504 residues: Putative BTB/POZ domain-containing protein R842 (504 aa).

One can recognise a BTB domain in the interval 21-91 (SDVKLILKDN…FYGFKSPSVT (71 aa)).

The protein belongs to the mimivirus BTB/WD family.

The sequence is that of Putative BTB/POZ domain-containing protein R842 from Acanthamoeba polyphaga (Amoeba).